Reading from the N-terminus, the 311-residue chain is Methionyl-tRNA formyltransferase (311 aa).

110 to 113 (SLLP) contacts (6S)-5,6,7,8-tetrahydrofolate.

It belongs to the Fmt family.

It catalyses the reaction L-methionyl-tRNA(fMet) + (6R)-10-formyltetrahydrofolate = N-formyl-L-methionyl-tRNA(fMet) + (6S)-5,6,7,8-tetrahydrofolate + H(+). Functionally, attaches a formyl group to the free amino group of methionyl-tRNA(fMet). The formyl group appears to play a dual role in the initiator identity of N-formylmethionyl-tRNA by promoting its recognition by IF2 and preventing the misappropriation of this tRNA by the elongation apparatus. The chain is Methionyl-tRNA formyltransferase from Streptococcus uberis (strain ATCC BAA-854 / 0140J).